The sequence spans 242 residues: Small ribosomal subunit protein uS2 (242 aa).

It belongs to the universal ribosomal protein uS2 family.

This is Small ribosomal subunit protein uS2 from Shewanella piezotolerans (strain WP3 / JCM 13877).